The sequence spans 622 residues: Glutamyl-tRNA(Gln) amidotransferase subunit E (622 aa).

The protein belongs to the GatB/GatE family. GatE subfamily. Heterodimer of GatD and GatE.

The catalysed reaction is L-glutamyl-tRNA(Gln) + L-glutamine + ATP + H2O = L-glutaminyl-tRNA(Gln) + L-glutamate + ADP + phosphate + H(+). Its function is as follows. Allows the formation of correctly charged Gln-tRNA(Gln) through the transamidation of misacylated Glu-tRNA(Gln) in organisms which lack glutaminyl-tRNA synthetase. The reaction takes place in the presence of glutamine and ATP through an activated gamma-phospho-Glu-tRNA(Gln). The GatDE system is specific for glutamate and does not act on aspartate. The sequence is that of Glutamyl-tRNA(Gln) amidotransferase subunit E from Halobacterium salinarum (strain ATCC 29341 / DSM 671 / R1).